Here is a 148-residue protein sequence, read N- to C-terminus: Cofilin/actin-depolymerizing factor homolog (148 aa).

The region spanning 4–143 (GVTVSDVCKT…SREAVEEKLR (140 aa)) is the ADF-H domain. Residues 19–23 (KKDKK) carry the Nuclear localization signal motif.

The protein belongs to the actin-binding proteins ADF family. In terms of processing, phosphorylated in vitro by protein kinase LIMK1. Phosphorylation is required for inactivation of tsr and for cell proliferation and axon growth. Phosphorylation is negatively regulated by the panthothenate kinase fbl which catalyzes the first step in the conversion of panthothenic acid to coenzyme A. Dephosphorylated by protein phosphatase ssh which activates tsr.

It is found in the cytoplasm. The protein localises to the cytoskeleton. The protein resides in the nucleus matrix. In terms of biological role, exhibits F-actin depolymerizing activity and regulates actin cytoskeleton dynamics. Required for cytokinesis in both mitotic and meiotic cells and for aster migration and separation. Promotes cell motility during ovary development and oogenesis. During larval development, required for the cell rearrangement needed for formation of terminal filaments which are stacks of somatic cells that are important for the initiation of ovarioles. Also required for border cell migration during oogenesis. During border cell migration, required for actin turnover and lamellipodial protrusion. Required for the establishment of planar cell polarity (PCP) where cells adopt a uniform orientation within the plane of an epithelium. During establishment of PCP, required for the redistribution of the PCP core proteins fz and stan/fmi to the proximodistal cell boundary. During pupal development, required for elongation of the retinal cell body and for rhabdomere morphogenesis. Required for mushroom body neuroblast proliferation and axon growth. Plays a role in the positive regulation of protein secretion. Plays a role in the regulation of nuclear localization of actin. Required for the maintenance of epithelial integrity by controlling cell junctions and is also necessary for cell survival and tissue growth through regulation of JNK and yki signaling. The protein is Cofilin/actin-depolymerizing factor homolog of Drosophila melanogaster (Fruit fly).